Here is a 219-residue protein sequence, read N- to C-terminus: Ribose-5-phosphate isomerase A (219 aa).

Residues 28-31 (TGST), 81-84 (DGAD), and 94-97 (KGGG) each bind substrate. E103 serves as the catalytic Proton acceptor. Residue K121 coordinates substrate.

Belongs to the ribose 5-phosphate isomerase family. Homodimer.

It carries out the reaction aldehydo-D-ribose 5-phosphate = D-ribulose 5-phosphate. It functions in the pathway carbohydrate degradation; pentose phosphate pathway; D-ribose 5-phosphate from D-ribulose 5-phosphate (non-oxidative stage): step 1/1. Functionally, catalyzes the reversible conversion of ribose-5-phosphate to ribulose 5-phosphate. This Edwardsiella ictaluri (strain 93-146) protein is Ribose-5-phosphate isomerase A.